Here is a 201-residue protein sequence, read N- to C-terminus: FMN-dependent NADH:quinone oxidoreductase (201 aa).

Residue 92–95 (MWNL) coordinates FMN.

It belongs to the azoreductase type 1 family. As to quaternary structure, homodimer. The cofactor is FMN.

The catalysed reaction is 2 a quinone + NADH + H(+) = 2 a 1,4-benzosemiquinone + NAD(+). It carries out the reaction N,N-dimethyl-1,4-phenylenediamine + anthranilate + 2 NAD(+) = 2-(4-dimethylaminophenyl)diazenylbenzoate + 2 NADH + 2 H(+). Functionally, quinone reductase that provides resistance to thiol-specific stress caused by electrophilic quinones. In terms of biological role, also exhibits azoreductase activity. Catalyzes the reductive cleavage of the azo bond in aromatic azo compounds to the corresponding amines. This is FMN-dependent NADH:quinone oxidoreductase from Caldicellulosiruptor bescii (strain ATCC BAA-1888 / DSM 6725 / KCTC 15123 / Z-1320) (Anaerocellum thermophilum).